Consider the following 320-residue polypeptide: Thymidine kinase (320 aa).

10 to 17 (GAYDTGKS) provides a ligand contact to ATP. Glu33 functions as the Proton acceptor in the catalytic mechanism. Substrate-binding residues include Tyr51 and Gln75. Residue Arg162 coordinates ATP. Arg168 contributes to the substrate binding site.

It belongs to the herpesviridae thymidine kinase family. In terms of assembly, homodimer.

The catalysed reaction is thymidine + ATP = dTMP + ADP + H(+). Its function is as follows. Catalyzes the transfer of the gamma-phospho group of ATP to thymidine to generate dTMP in the salvage pathway of pyrimidine synthesis. The dTMP serves as a substrate for DNA polymerase during viral DNA replication. Allows the virus to be reactivated and to grow in non-proliferative cells lacking a high concentration of phosphorylated nucleic acid precursors. The polypeptide is Thymidine kinase (Suid herpesvirus 1 (strain NIA-3) (SuHV-1)).